Consider the following 447-residue polypeptide: Tubulin beta-4 chain (447 aa).

Residues Gln-11, Glu-71, Ser-140, Gly-144, Thr-145, Gly-146, Asn-206, and Asn-228 each coordinate GTP. Glu-71 is a binding site for Mg(2+). Residues 428 to 447 are disordered; it reads QDATAEEYEEEEHDGEEEHA. Acidic residues predominate over residues 431 to 447; the sequence is TAEEYEEEEHDGEEEHA.

The protein belongs to the tubulin family. In terms of assembly, dimer of alpha and beta chains. A typical microtubule is a hollow water-filled tube with an outer diameter of 25 nm and an inner diameter of 15 nM. Alpha-beta heterodimers associate head-to-tail to form protofilaments running lengthwise along the microtubule wall with the beta-tubulin subunit facing the microtubule plus end conferring a structural polarity. Microtubules usually have 13 protofilaments but different protofilament numbers can be found in some organisms and specialized cells. Requires Mg(2+) as cofactor.

It is found in the cytoplasm. It localises to the cytoskeleton. In terms of biological role, tubulin is the major constituent of microtubules, a cylinder consisting of laterally associated linear protofilaments composed of alpha- and beta-tubulin heterodimers. Microtubules grow by the addition of GTP-tubulin dimers to the microtubule end, where a stabilizing cap forms. Below the cap, tubulin dimers are in GDP-bound state, owing to GTPase activity of alpha-tubulin. The sequence is that of Tubulin beta-4 chain (TUBB4) from Zea mays (Maize).